The sequence spans 343 residues: UPF0157 protein YqkA (343 aa).

Residues 8 to 144 form the N-acetyltransferase domain; it reads KEATIAREIL…VKAAQGLLLS (137 aa). The interval 135–343 is UPF0157; the sequence is VKAAQGLLLS…ENDENGGFTL (209 aa).

This sequence in the C-terminal section; belongs to the UPF0157 (GrpB) family.

The chain is UPF0157 protein YqkA (yqkA) from Bacillus subtilis (strain 168).